The chain runs to 208 residues: Adult-specific cuticular protein ACP-20 (208 aa).

The N-terminal stretch at 1-17 (MLVQITALAFLAGIASA) is a signal peptide. Copy 1 of the repeat occupies 34–43 (GLGGGLGGVG). The tract at residues 34 to 180 (GLGGGLGGVG…GLGGGLGGVG (147 aa)) is 2 X 10 AA repeats. The Chitin-binding type R&amp;R domain maps to 64-135 (PAHYQFKYGV…VGHAVHPQVL (72 aa)). Residues 171-180 (GLGGGLGGVG) form repeat 2.

Epidermal regions synthesizing hard cuticle.

Its function is as follows. Cuticular proteins play a significant role in determining the physical properties of cuticles. This chain is Adult-specific cuticular protein ACP-20 (ACP20), found in Tenebrio molitor (Yellow mealworm beetle).